The following is a 277-amino-acid chain: Carbonyl reductase [NADPH] 1 (277 aa).

The residue at position 2 (Ser-2) is an N-acetylserine. Residues Ser-2 and Ser-30 each carry the phosphoserine modification. Residues 10-34, 63-64, and Asn-90 each bind NADP(+); these read VTGGNKGIGLAIVRDLCRLFSGDVV and DI. Residues 95–97 and Gln-106 each bind glutathione; that span reads FKV. Substrate is bound at residue Ser-140. 193–194 serves as a coordination point for glutathione; the sequence is AY. Catalysis depends on Tyr-194, which acts as the Proton acceptor. NADP(+)-binding positions include 194-198 and 231-233; these read YGVTK and VRT. N6-1-carboxyethyl lysine is present on Lys-239.

This sequence belongs to the short-chain dehydrogenases/reductases (SDR) family. In terms of assembly, monomer. As to expression, expressed in kidney (at protein level).

It localises to the cytoplasm. It catalyses the reaction a secondary alcohol + NADP(+) = a ketone + NADPH + H(+). The catalysed reaction is a primary alcohol + NADP(+) = an aldehyde + NADPH + H(+). It carries out the reaction prostaglandin F2alpha + NADP(+) = prostaglandin E2 + NADPH + H(+). The enzyme catalyses prostaglandin E1 + NADP(+) = 15-oxoprostaglandin E1 + NADPH + H(+). It catalyses the reaction menadione + NADPH + H(+) = menadiol + NADP(+). The catalysed reaction is prostaglandin D2 + NADP(+) = 15-oxoprostaglandin D2 + NADPH + H(+). It carries out the reaction prostaglandin E2 + NADP(+) = 15-oxoprostaglandin E2 + NADPH + H(+). The enzyme catalyses prostaglandin F2alpha + NADP(+) = 15-oxoprostaglandin F2alpha + NADPH + H(+). It catalyses the reaction daunorubicin + NADPH + H(+) = 13-dihydrodaunorubicin + NADP(+). The catalysed reaction is S-nitrosoglutathione + NADPH + H(+) = S-(hydroxysulfenamide)glutathione + NADP(+). It carries out the reaction cortisol + NADPH + H(+) = 20beta-dihydrocortisol + NADP(+). The enzyme catalyses corticosterone + NADPH + H(+) = 20beta-dihydrocorticosterone + NADP(+). Inhibited by quercetin, rutenin and its derivatives. In terms of biological role, NADPH-dependent reductase with broad substrate specificity. Catalyzes the reduction of a wide variety of carbonyl compounds including quinones, prostaglandins, menadione, plus various xenobiotics. Catalyzes the reduction of the antitumor anthracyclines doxorubicin and daunorubicin to the cardiotoxic compounds doxorubicinol and daunorubicinol. Can convert prostaglandin E to prostaglandin F2-alpha. Can bind glutathione, which explains its higher affinity for glutathione-conjugated substrates. Catalyzes the reduction of S-nitrosoglutathione. In addition, participates in the glucocorticoid metabolism by catalyzing the NADPH-dependent cortisol/corticosterone into 20beta-dihydrocortisol (20b-DHF) or 20beta-corticosterone (20b-DHB), which are weak agonists of NR3C1 and NR3C2 in adipose tissue. This Homo sapiens (Human) protein is Carbonyl reductase [NADPH] 1.